Reading from the N-terminus, the 109-residue chain is Protein FAM32A-like (109 aa).

Residues 1–48 form a disordered region; the sequence is MSEYKSVQKGSLKLKGVSLPSKKKKKKNKEMKRLEEQVLTSENEEGTK. Low complexity predominate over residues 9-20; the sequence is KGSLKLKGVSLP. The span at 21 to 30 shows a compositional bias: basic residues; the sequence is SKKKKKKNKE.

Belongs to the FAM32 family.

The protein localises to the nucleus. Functionally, may induce G2 arrest and apoptosis. May also increase cell sensitivity to apoptotic stimuli. The protein is Protein FAM32A-like (fam32al) of Danio rerio (Zebrafish).